We begin with the raw amino-acid sequence, 199 residues long: Cytochrome c oxidase subunit 2 (199 aa).

The chain crosses the membrane as a helical span at residues Ala1–Met13. Residues Leu14 to Gln26 are Mitochondrial matrix-facing. Residues Glu27–Met54 traverse the membrane as a helical segment. The Mitochondrial intermembrane portion of the chain corresponds to Asp55–Leu199. Cu cation contacts are provided by His128, Cys163, Glu165, Cys167, His171, and Met174. Glu165 is a binding site for Mg(2+).

It belongs to the cytochrome c oxidase subunit 2 family. In terms of assembly, component of the cytochrome c oxidase (complex IV, CIV), a multisubunit enzyme composed of 14 subunits. The complex is composed of a catalytic core of 3 subunits MT-CO1, MT-CO2 and MT-CO3, encoded in the mitochondrial DNA, and 11 supernumerary subunits COX4I, COX5A, COX5B, COX6A, COX6B, COX6C, COX7A, COX7B, COX7C, COX8 and NDUFA4, which are encoded in the nuclear genome. The complex exists as a monomer or a dimer and forms supercomplexes (SCs) in the inner mitochondrial membrane with NADH-ubiquinone oxidoreductase (complex I, CI) and ubiquinol-cytochrome c oxidoreductase (cytochrome b-c1 complex, complex III, CIII), resulting in different assemblies (supercomplex SCI(1)III(2)IV(1) and megacomplex MCI(2)III(2)IV(2)). Found in a complex with TMEM177, COA6, COX18, COX20, SCO1 and SCO2. Interacts with TMEM177 in a COX20-dependent manner. Interacts with COX20. Interacts with COX16. Cu cation serves as cofactor.

It localises to the mitochondrion inner membrane. The catalysed reaction is 4 Fe(II)-[cytochrome c] + O2 + 8 H(+)(in) = 4 Fe(III)-[cytochrome c] + 2 H2O + 4 H(+)(out). Its function is as follows. Component of the cytochrome c oxidase, the last enzyme in the mitochondrial electron transport chain which drives oxidative phosphorylation. The respiratory chain contains 3 multisubunit complexes succinate dehydrogenase (complex II, CII), ubiquinol-cytochrome c oxidoreductase (cytochrome b-c1 complex, complex III, CIII) and cytochrome c oxidase (complex IV, CIV), that cooperate to transfer electrons derived from NADH and succinate to molecular oxygen, creating an electrochemical gradient over the inner membrane that drives transmembrane transport and the ATP synthase. Cytochrome c oxidase is the component of the respiratory chain that catalyzes the reduction of oxygen to water. Electrons originating from reduced cytochrome c in the intermembrane space (IMS) are transferred via the dinuclear copper A center (CU(A)) of subunit 2 and heme A of subunit 1 to the active site in subunit 1, a binuclear center (BNC) formed by heme A3 and copper B (CU(B)). The BNC reduces molecular oxygen to 2 water molecules using 4 electrons from cytochrome c in the IMS and 4 protons from the mitochondrial matrix. This Dromaius novaehollandiae (Emu) protein is Cytochrome c oxidase subunit 2 (MT-CO2).